The chain runs to 945 residues: Chaperone protein ClpD, chloroplastic (945 aa).

A chloroplast-targeting transit peptide spans 1 to 89; it reads MEVLSTSSPL…FERFTERAIR (89 aa). Repeat stretches follow at residues 90–146 and 168–233; these read AIIF…WDEA and FSIS…LKGE. The Clp R domain maps to 90–233; sequence AIIFSQKEAK…AAALTRLKGE (144 aa). The disordered stretch occupies residues 233-264; sequence EIAKDGREPSSSSKGSFESPPSGRIAGSGPGG. Over residues 241–255 the composition is skewed to low complexity; sequence PSSSSKGSFESPPSG. Residues 271 to 523 form an i region; the sequence is LEQFCVDLTA…RARIEAFRKK (253 aa). 316–323 provides a ligand contact to ATP; the sequence is GEAGVGKT. The tract at residues 555 to 586 is disordered; the sequence is SRQKQDDGDAISDESGELVEESSLPPAAGDDE. Residues 562 to 574 show a composition bias toward acidic residues; that stretch reads GDAISDESGELVE. Residues 590–781 form an II region; that stretch reads VGPDDIAAVA…LIIMTSNVGS (192 aa). ATP is bound at residue 664–671; the sequence is GPTGVGKT.

It belongs to the ClpA/ClpB family. ClpD subfamily. As to quaternary structure, homodimer and homohexamer. Hexamerization upon addition of ATP. Interacts with CLPT1. Stably associated with the import machinery. The cofactor is Mg(2+). As to expression, expressed in stems and leaves.

It is found in the plastid. Its subcellular location is the chloroplast stroma. It catalyses the reaction ATP + H2O = ADP + phosphate + H(+). Its function is as follows. Molecular chaperone that interact with a ClpP-like protease involved in degradation of denatured proteins in the chloroplast. The ATPase activity of CLPD is stimulated by CLPT1. Has no ADPase activity. Interacts with transit peptides with a positional preference. Localization of the signal sequence at the N-terminal end of a protein seems mandatory for interaction to take place. This Arabidopsis thaliana (Mouse-ear cress) protein is Chaperone protein ClpD, chloroplastic.